Consider the following 274-residue polypeptide: Ribose-5-phosphate isomerase (274 aa).

Belongs to the ribose 5-phosphate isomerase family.

It is found in the cytoplasm. It catalyses the reaction aldehydo-D-ribose 5-phosphate = D-ribulose 5-phosphate. It participates in carbohydrate degradation; pentose phosphate pathway; D-ribose 5-phosphate from D-ribulose 5-phosphate (non-oxidative stage): step 1/1. This is Ribose-5-phosphate isomerase (RKI1) from Kluyveromyces lactis (strain ATCC 8585 / CBS 2359 / DSM 70799 / NBRC 1267 / NRRL Y-1140 / WM37) (Yeast).